The primary structure comprises 334 residues: Tryptophan--tRNA ligase (334 aa).

Residues 11–13 (QPS) and 19–20 (GN) contribute to the ATP site. The 'HIGH' region motif lies at 12 to 20 (PSGELTIGN). Residue aspartate 135 coordinates L-tryptophan. ATP-binding positions include 147–149 (GED), valine 186, and 195–199 (KMSKS). A 'KMSKS' region motif is present at residues 195-199 (KMSKS).

The protein belongs to the class-I aminoacyl-tRNA synthetase family. As to quaternary structure, homodimer.

Its subcellular location is the cytoplasm. The enzyme catalyses tRNA(Trp) + L-tryptophan + ATP = L-tryptophyl-tRNA(Trp) + AMP + diphosphate + H(+). Catalyzes the attachment of tryptophan to tRNA(Trp). The sequence is that of Tryptophan--tRNA ligase from Klebsiella aerogenes (Enterobacter aerogenes).